The chain runs to 713 residues: Major surface-labeled trophozoite antigen 417 (713 aa).

The N-terminal stretch at 1-17 is a signal peptide; that stretch reads MFGRFLLAIVILQLART. Topologically, residues 18–679 are extracellular; it reads ACTQEADDGK…KDSGSTNKSG (662 aa). 2 N-linked (GlcNAc...) asparagine glycosylation sites follow: Asn-289 and Asn-676. Residues 680 to 708 traverse the membrane as a helical segment; that stretch reads LSTGAIAGISVAVIVVVGGLIGFLCWWFL. At 709–713 the chain is on the cytoplasmic side; it reads CRGKA.

The protein belongs to the Giardia variant surface protein family.

It is found in the cell membrane. This is Major surface-labeled trophozoite antigen 417 (TSA 417) from Giardia intestinalis (Giardia lamblia).